The sequence spans 135 residues: Large ribosomal subunit protein eL32 (135 aa).

The protein belongs to the eukaryotic ribosomal protein eL32 family.

The polypeptide is Large ribosomal subunit protein eL32 (Methanococcus maripaludis (strain C6 / ATCC BAA-1332)).